A 339-amino-acid chain; its full sequence is Polyhydroxybutyrate depolymerase (339 aa).

A signal peptide spans 1 to 20 (MFDSVKIAWLVALGAAQVAA). Serine 39 is an active-site residue. Residues cysteine 70 and cysteine 79 are joined by a disulfide bond. Aspartate 121 is a catalytic residue. A glycan (N-linked (GlcNAc...) asparagine) is linked at asparagine 144. Histidine 155 is an active-site residue. Disulfide bonds link cysteine 169–cysteine 180, cysteine 234–cysteine 241, and cysteine 250–cysteine 304. Tryptophan 307 provides a ligand contact to (3R)-hydroxybutanoate trimer.

Belongs to the carbohydrate esterase 1 (CE1) family.

The protein localises to the secreted. It carries out the reaction [(3R)-hydroxybutanoate](n) + H2O = [(3R)-hydroxybutanoate](n-1) + (R)-3-hydroxybutanoate + H(+). The enzyme is completely inhibited by dithiothreitol (DTT) and diisopropylfluorophosphate (DFP), and partially inhibited by HgCl(2) and by enzyme3-(p-nitrophenoxy)propane (EPNP). Activity is not affected by N-ethylmaleimide (NEM) or phenylmethylsulfonyl fluoride (PMSF). Its function is as follows. Esterase involved in the hydrolysis of polyhydroxybutyrate, a microbial polyester that can be produced from renewable resources. The protein is Polyhydroxybutyrate depolymerase of Talaromyces funiculosus (Fruitlet core rot fungus).